Here is a 229-residue protein sequence, read N- to C-terminus: Glutathione S-transferase 1 (229 aa).

The region spanning 2–83 (SPVKVFGHPM…YILRKYGGTA (82 aa)) is the GST N-terminal domain. Glutathione-binding positions include 41-42 (HK), 54-55 (KM), and 67-68 (ES). Residues 93–223 (GIEELAMVDV…RVCKHMPTEF (131 aa)) form the GST C-terminal domain.

The protein belongs to the GST superfamily. Phi family.

The catalysed reaction is RX + glutathione = an S-substituted glutathione + a halide anion + H(+). Conjugation of reduced glutathione to a wide number of exogenous and endogenous hydrophobic electrophiles. The polypeptide is Glutathione S-transferase 1 (GSTA1) (Triticum aestivum (Wheat)).